The chain runs to 206 residues: Cytochrome c oxidase assembly protein CtaG (206 aa).

At 1 to 17 (MPEVQPSALPKPAPRLG) the chain is on the cytoplasmic side. Residues 18 to 40 (RDAAVASICGFVVALMVGASFAA) form a helical; Signal-anchor for type II membrane protein membrane-spanning segment. Residues 41–206 (VPFYDWFCRT…GEPDQRKGNL (166 aa)) lie on the Periplasmic side of the membrane.

It belongs to the COX11/CtaG family.

It localises to the cell inner membrane. Functionally, exerts its effect at some terminal stage of cytochrome c oxidase synthesis, probably by being involved in the insertion of the copper B into subunit I. The chain is Cytochrome c oxidase assembly protein CtaG from Rhodopseudomonas palustris (strain BisB5).